A 325-amino-acid chain; its full sequence is Aldo-keto reductase family 1 member A1 (325 aa).

At alanine 2 the chain carries N-acetylalanine. Residue serine 4 is modified to Phosphoserine. Residues 11–20, threonine 21, tryptophan 22, and aspartate 45 contribute to the NADP(+) site; that span reads GQKMPLIGLG. Tyrosine 50 acts as the Proton donor in catalysis. Residue lysine 127 is modified to N6-acetyllysine; alternate. Position 127 is an N6-succinyllysine; alternate (lysine 127). Lysine 145 bears the N6-succinyllysine mark. The NADP(+) site is built by serine 162, asparagine 163, serine 211, leucine 213, serine 215, serine 216, lysine 263, serine 264, valine 265, threonine 266, arginine 269, glutamine 272, and asparagine 273. Phosphoserine is present on serine 211.

It belongs to the aldo/keto reductase family. In terms of assembly, monomer.

The protein resides in the cytoplasm. It is found in the cytosol. The protein localises to the apical cell membrane. The catalysed reaction is a primary alcohol + NADP(+) = an aldehyde + NADPH + H(+). It catalyses the reaction glycerol + NADP(+) = D-glyceraldehyde + NADPH + H(+). It carries out the reaction glycerol + NADP(+) = L-glyceraldehyde + NADPH + H(+). The enzyme catalyses L-gulonate + NADP(+) = aldehydo-D-glucuronate + NADPH + H(+). The catalysed reaction is L-gulono-1,4-lactone + NADP(+) = D-glucurono-3,6-lactone + NADPH + H(+). It catalyses the reaction allyl alcohol + NADP(+) = acrolein + NADPH + H(+). It carries out the reaction hydroxyacetone + NADP(+) = methylglyoxal + NADPH + H(+). The enzyme catalyses 3-deoxyfructose + NADP(+) = 3-deoxyglucosone + NADPH + H(+). The catalysed reaction is (R)-mevalonate + NADP(+) = (R)-mevaldate + NADPH + H(+). It catalyses the reaction pyridine 3-methanol + NADP(+) = pyridine-3-carbaldehyde + NADPH + H(+). It carries out the reaction S-nitroso-CoA + NADPH + H(+) = sulfinamide-CoA + NADP(+). The enzyme catalyses S-nitrosoglutathione + NADPH + H(+) = S-(hydroxysulfenamide)glutathione + NADP(+). Functionally, catalyzes the NADPH-dependent reduction of a wide variety of carbonyl-containing compounds to their corresponding alcohols. Displays enzymatic activity towards endogenous metabolites such as aromatic and aliphatic aldehydes, ketones, monosaccharides and bile acids, with a preference for negatively charged substrates, such as glucuronate and succinic semialdehyde. Plays an important role in ascorbic acid biosynthesis by catalyzing the reduction of D-glucuronic acid and D-glucurono-gamma-lactone. Functions as a detoxifiying enzyme by reducing a range of toxic aldehydes. Reduces methylglyoxal and 3-deoxyglucosone, which are present at elevated levels under hyperglycemic conditions and are cytotoxic. Involved also in the detoxification of lipid-derived aldehydes like acrolein. Plays a role in the activation of procarcinogens, such as polycyclic aromatic hydrocarbon trans-dihydrodiols, and in the metabolism of various xenobiotics and drugs. Also acts as an inhibitor of protein S-nitrosylation by mediating degradation of S-nitroso-coenzyme A (S-nitroso-CoA), a cofactor required to S-nitrosylate proteins. S-nitroso-CoA reductase activity is involved in reprogramming intermediary metabolism in renal proximal tubules, notably by inhibiting protein S-nitrosylation of isoform 2 of PKM (PKM2). Also acts as a S-nitroso-glutathione reductase by catalyzing the NADPH-dependent reduction of S-nitrosoglutathione. Displays no reductase activity towards retinoids. The chain is Aldo-keto reductase family 1 member A1 (AKR1A1) from Sus scrofa (Pig).